The following is a 455-amino-acid chain: Protein 60A (455 aa).

Residues 1–36 (MSGLRNTSEAVAVLASLGLGMVLLMFVATTPPAVEA) form the signal peptide. Residues 37 to 335 (TQSGIYIDNG…SASHPRKRKK (299 aa)) constitute a propeptide that is removed on maturation. The segment covering 108-118 (GLSDQDEDDDY) has biased composition (acidic residues). The segment at 108-138 (GLSDQDEDDDYERGHRSRRSADLEEDEGEQQ) is disordered. Residues Asn238 and Asn250 are each glycosylated (N-linked (GlcNAc...) asparagine). Positions 316 to 345 (AHSSHHRSKRSASHPRKRKKSVSPNNVPLL) are disordered. Positions 318 to 336 (SSHHRSKRSASHPRKRKKS) are enriched in basic residues. 3 disulfides stabilise this stretch: Cys354–Cys420, Cys383–Cys452, and Cys387–Cys454. Asn396 is a glycosylation site (N-linked (GlcNAc...) asparagine).

It belongs to the TGF-beta family. Homodimer; disulfide-linked. Interacts with nord and dpp. Expressed in cells of the developing foregut and hindgut during germ band retraction and later embryonic stages. Expressed in the wing disk, mainly in the posterior compartment in the pteropleural and medial regions extending into the progenitors of the scutellum. High levels are found within the posterior and anterior compartments of the wing pouch and low levels in the hinge region. In the eye/antennal disk, expression is highest anterior to the morphogenetic furrow and in the medial regions with lower levels of expression posterior to the morphogenetic furrow. Expressed throughout the posterior compartment of the leg imaginal disks and within the ventral anterior compartment.

It localises to the secreted. Required for the growth of imaginal tissues and for patterning of the adult wing. The polypeptide is Protein 60A (gbb) (Drosophila melanogaster (Fruit fly)).